The chain runs to 243 residues: Probable transcriptional regulatory protein BPP2422 (243 aa).

The disordered stretch occupies residues 1-21 (MAGHSKWANIQHRKGRQDAKR).

It belongs to the TACO1 family.

The protein localises to the cytoplasm. This Bordetella parapertussis (strain 12822 / ATCC BAA-587 / NCTC 13253) protein is Probable transcriptional regulatory protein BPP2422.